A 178-amino-acid chain; its full sequence is CASP-like protein 4D1 (178 aa).

Alanine 2 is subject to N-acetylalanine. At 2–14 (APPPPAPPSVTLR) the chain is on the cytoplasmic side. Residues 15–35 (TVLLLLRVLTAAFLLITVVLI) traverse the membrane as a helical segment. Residues 36-60 (STNTVTLEISSTSIKLPFNDVYAYR) are Extracellular-facing. The helical transmembrane segment at 61–81 (YMLSAAVIGLVYAVVQLFLTI) threads the bilayer. Over 82–97 (SQFATGKTHPLTYQFD) the chain is Cytoplasmic. The chain crosses the membrane as a helical span at residues 98–118 (FYGDKVISYLLATGSAAGFGV). Residues 119–149 (SKDLKDTYIALIEFDSTDPVDKFFSKGYASA) lie on the Extracellular side of the membrane. Residues 150–170 (SLLLFAFVSLAVLSVFSSLAL) traverse the membrane as a helical segment. Topologically, residues 171-178 (SKRPVPVS) are cytoplasmic.

This sequence belongs to the Casparian strip membrane proteins (CASP) family. In terms of assembly, homodimer and heterodimers. In terms of tissue distribution, expressed in the root epidermis.

The protein resides in the cell membrane. The protein is CASP-like protein 4D1 of Arabidopsis thaliana (Mouse-ear cress).